Consider the following 289-residue polypeptide: Pyridoxal kinase PdxY (289 aa).

Residues serine 9 and 44–45 (TQ) contribute to the substrate site. ATP is bound by residues aspartate 112, valine 144, glutamate 149, and lysine 182. Aspartate 221 is a substrate binding site.

Belongs to the pyridoxine kinase family. PdxY subfamily. As to quaternary structure, homodimer. It depends on Mg(2+) as a cofactor.

The enzyme catalyses pyridoxal + ATP = pyridoxal 5'-phosphate + ADP + H(+). Its pathway is cofactor metabolism; pyridoxal 5'-phosphate salvage; pyridoxal 5'-phosphate from pyridoxal: step 1/1. Pyridoxal kinase involved in the salvage pathway of pyridoxal 5'-phosphate (PLP). Catalyzes the phosphorylation of pyridoxal to PLP. The sequence is that of Pyridoxal kinase PdxY from Vibrio parahaemolyticus serotype O3:K6 (strain RIMD 2210633).